The chain runs to 503 residues: MPSVMEKSHGSSAVISRNRAKSDSLGNSEEESSEDEAPRDSMIRVGSDYQAQIPECKPDNTSPSGNVELKGMLVWSPSQFVSDAKLNEYITMAKEKHGYNVEQSLGMLLWHKHDVERSLADLANFTPFPEEWSVEDKVLFEQAFSFHGKSFQRIQQMLPEKLIPSLVKYYYSWKKTRSRTSVMDRQARRLQAKREEGMEEVEDQIKMSDNETDVTETKKEAPVPQKVVSGAVSGKTGPVRKEPLISQYRHHPLRSRQRPPKGIHLNKSDVSAVCASSEMPAIALCQLETQLISLKRQVQNIKQMNSSLKESLEGGISEMRPPELNIKLNARWTTDEQLLAVQAVRKYGKDFQAISEVLGNKTPSQVKTFFISYRRRFNLEEVLQEWEAEQEPSPPPASTDMSNKTSGSSQTPNEEDDEVQITSVSSSSQPAPPAAAAAASLSLPPPLLRPAIPCAPTLHRQPPPLQPGRLLQPRPPPLVRPAPRQSPRAPPALVGSHAESTFS.

Residues M1 to S62 are disordered. The ELM2 domain maps to S41–T126. Positions P127–S178 constitute an SANT 1 domain. Coiled coils occupy residues V182–K206 and Q286–G314. The SANT 2 domain occupies K327–N378. Residues E385–S503 form a disordered region. Over residues T399–P412 the composition is skewed to polar residues. The span at S423–S442 shows a compositional bias: low complexity.

It belongs to the CoREST family.

Its subcellular location is the nucleus. Its function is as follows. May act as a component of a corepressor complex that represses transcription. This Xenopus laevis (African clawed frog) protein is REST corepressor 2 (rcor2).